Consider the following 396-residue polypeptide: Tryptophan synthase beta chain (396 aa).

An N6-(pyridoxal phosphate)lysine modification is found at Lys86.

Belongs to the TrpB family. Tetramer of two alpha and two beta chains. The cofactor is pyridoxal 5'-phosphate.

The enzyme catalyses (1S,2R)-1-C-(indol-3-yl)glycerol 3-phosphate + L-serine = D-glyceraldehyde 3-phosphate + L-tryptophan + H2O. It functions in the pathway amino-acid biosynthesis; L-tryptophan biosynthesis; L-tryptophan from chorismate: step 5/5. In terms of biological role, the beta subunit is responsible for the synthesis of L-tryptophan from indole and L-serine. The sequence is that of Tryptophan synthase beta chain from Pectobacterium carotovorum subsp. carotovorum (strain PC1).